The primary structure comprises 517 residues: Shugoshin 1 (517 aa).

A coiled-coil region spans residues 1 to 89; that stretch reads MAKERCQKRS…DVILQLRKEC (89 aa). Residues 1–176 form a necessary for interaction with PPP2CA and PPP2R1A region; it reads MAKERCQKRS…DFDSGKVEST (176 aa). Disordered stretches follow at residues 107 to 136, 149 to 173, 267 to 317, and 334 to 427; these read QSEE…LSGK, PYQT…SGKV, PEQI…TLDG, and HPTP…QESP. A coiled-coil region spans residues 268–291; the sequence is EQIESKHKRARKRRAEQRRTKQRC. Positions 273-302 are enriched in basic residues; sequence KHKRARKRRAEQRRTKQRCKSKSSLRSKGN. A compositionally biased stretch (polar residues) spans 341-363; it reads KMNNGCNKETDSSNSEVSDLECS. Basic and acidic residues predominate over residues 379-390; the sequence is RLRDYRESERAV. Phosphoserine is present on Ser-426. The PXVXL/I motif motif lies at 441 to 445; it reads PRVKI. The D-box motif lies at 447–455; sequence KPSLPPKRR. Ser-497 bears the Phosphoserine; by NEK2 mark.

Belongs to the shugoshin family. Interacts with PPP2CA (or PPP2CB), PPP2R1B, PPP2R5A, PPP2R5B, PPP2R5C, PPP2R5D, PPP2R5E, SET, LRRC59, RBM10 (or RBM5), RPL10A, RPL28, RPL7, RPL7A and RPLP1. Interaction with protein phosphatase 2A occurs most probably through direct binding to the regulatory B56 subunits: PPP2R1B, PPP2R5A, PPP2R5B, PPP2R5C, PPP2R5D, PPP2R5E. Interacts with PPP2R1A and NEK2. Interacts with CDCA8. Post-translationally, ubiquitinated and degraded during mitotic exit by APC/C-Cdh1. In terms of processing, phosphorylation by NEK2 is essential for chromosome congression in mitosis and for the proper attachment of spindle microtubule to the kinetochore. Phosphorylated by PLK1 and AUKRB. In terms of tissue distribution, ubiquitously expressed in proliferating cells. Moderately expressed in the oocytes.

It localises to the nucleus. The protein resides in the chromosome. Its subcellular location is the centromere. The protein localises to the kinetochore. It is found in the cytoplasm. It localises to the cytoskeleton. The protein resides in the spindle pole. Its subcellular location is the microtubule organizing center. The protein localises to the centrosome. It is found in the nucleus speckle. Its function is as follows. Plays a central role in chromosome cohesion during mitosis by preventing premature dissociation of cohesin complex from centromeres after prophase, when most of cohesin complex dissociates from chromosomes arms. May act by preventing phosphorylation of the STAG2 subunit of cohesin complex at the centromere, ensuring cohesin persistence at centromere until cohesin cleavage by ESPL1/separase at anaphase. Essential for proper chromosome segregation during mitosis and this function requires interaction with PPP2R1A. Its phosphorylated form is necessary for chromosome congression and for the proper attachment of spindle microtubule to the kinetochore. Necessary for kinetochore localization of PLK1 and CENPF. May play a role in the tension sensing mechanism of the spindle-assembly checkpoint by regulating PLK1 kinetochore affinity. Involved in centromeric enrichment of AUKRB in prometaphase. The protein is Shugoshin 1 of Mus musculus (Mouse).